Reading from the N-terminus, the 2083-residue chain is Nonribosomal peptide synthetase sidD (2083 aa).

The segment at 251–650 (TYRQIDQYSS…GEIESQLRAR (400 aa)) is adenylation 1. Residues 764–840 (RELSDLERRL…AMASVVRICD (77 aa)) form the Carrier 1 domain. Serine 801 carries the post-translational modification O-(pantetheine 4'-phosphoryl)serine. Positions 876-1146 (EDIYPCTPTQ…IATVPIRVRI (271 aa)) are condensation 1. Residues 1336–1421 (LSPIGCVGEL…TEIERHLAEH (86 aa)) form an adenylation 2 region. Residues 1557-1633 (NHLSASESIL…DAARVMKVDE (77 aa)) enclose the Carrier 2 domain. Residue serine 1594 is modified to O-(pantetheine 4'-phosphoryl)serine. Positions 1674–1946 (DVLPVTDSQD…YQLTPVRVPF (273 aa)) are condensation 2.

Belongs to the NRP synthetase family.

The protein operates within siderophore biosynthesis. Its function is as follows. Nonribosomal peptide synthetase; part of the siderophore biosynthetic pathway. Aspergillus fumigatus produces four types of siderophores, low-molecular-mass iron chelators, including excreted fusarinine C (FsC) and triacetylfusarinine C (TAFC) for iron uptake; and intacellular ferricrocin (FC) for hyphal and hydroxyferricrocin (HFC) for conidial iron distribution and storage. TAFC consists of three N(2)-acetyl-N(5)-anhydromevalonyl-N(5)-hydroxyornithine residues cyclically linked by ester bonds; FC is a cyclic hexapeptide with the structure Gly-Ser-Gly-(N(5)-acetyl-N(5)-hydroxyornithine)x3. The biosynthesis of all four siderophores depends on the hydroxylation of ornithine, catalyzed by the monooxygenase sidA. Subsequently, the pathways for biosynthesis of extra- and intracellular siderophores split. For biosynthesis of extracellular siderophores, the transacylase sidF transfers anhydromevalonyl to N(5)-hydroxyornithine. The required anhydromevalonyl-CoA moiety is derived from mevalonate by CoA ligation and dehydration catalyzed by sidI and sidH respectively. The acetylation of N(5)-hydroxyornithine for FC biosynthesis involves the constitutively expressed sidL. FC is hydroxylated to HFC by an as yet uncharacterized enzyme during conidiation. Assembly of fusarinine C (FsC) and FC is catalyzed by two different nonribosomal peptide synthetases (NRPS), sidD and sidC respectively. Subsequently, sidG catalyzes N2-acetylation of FsC for forming TAFC. Both extra- and intracellular siderophores are crucial for growth during iron limitation and virulence. This is Nonribosomal peptide synthetase sidD from Aspergillus fumigatus (strain ATCC MYA-4609 / CBS 101355 / FGSC A1100 / Af293) (Neosartorya fumigata).